The sequence spans 431 residues: Adenylosuccinate synthetase (431 aa).

Residues glycine 21 to lysine 27 and glycine 49 to threonine 51 contribute to the GTP site. The active-site Proton acceptor is aspartate 22. Aspartate 22 and glycine 49 together coordinate Mg(2+). IMP contacts are provided by residues aspartate 22–lysine 25, asparagine 47–histidine 50, threonine 138, arginine 152, asparagine 230, threonine 245, and arginine 309. Residue histidine 50 is the Proton donor of the active site. Alanine 305–arginine 311 serves as a coordination point for substrate. GTP-binding positions include arginine 311, lysine 337–aspartate 339, and glycine 419–glycine 421.

The protein belongs to the adenylosuccinate synthetase family. Homodimer. It depends on Mg(2+) as a cofactor.

The protein localises to the cytoplasm. The enzyme catalyses IMP + L-aspartate + GTP = N(6)-(1,2-dicarboxyethyl)-AMP + GDP + phosphate + 2 H(+). Its pathway is purine metabolism; AMP biosynthesis via de novo pathway; AMP from IMP: step 1/2. Plays an important role in the de novo pathway and in the salvage pathway of purine nucleotide biosynthesis. Catalyzes the first committed step in the biosynthesis of AMP from IMP. This chain is Adenylosuccinate synthetase, found in Paramecium tetraurelia.